A 547-amino-acid chain; its full sequence is CTP synthase (547 aa).

The tract at residues 1–266 (MTKYIFVTGG…GDYLVERLGL (266 aa)) is amidoligase domain. S13 serves as a coordination point for CTP. S13 contacts UTP. 14 to 19 (SVGKGI) is a binding site for ATP. Residue Y54 participates in L-glutamine binding. D71 contributes to the ATP binding site. 2 residues coordinate Mg(2+): D71 and E141. Residues 148-150 (DIE), 187-192 (KTKPTQ), and K223 each bind CTP. UTP is bound by residues 187–192 (KTKPTQ) and K223. The region spanning 291–533 (PIALVGKYVE…IAAAAQTLLA (243 aa)) is the Glutamine amidotransferase type-1 domain. L-glutamine is bound at residue G353. The active-site Nucleophile; for glutamine hydrolysis is C380. L-glutamine is bound by residues 381-384 (LGMQ), E404, and R461. Residues H506 and E508 contribute to the active site.

It belongs to the CTP synthase family. Homotetramer.

It catalyses the reaction UTP + L-glutamine + ATP + H2O = CTP + L-glutamate + ADP + phosphate + 2 H(+). It carries out the reaction L-glutamine + H2O = L-glutamate + NH4(+). The catalysed reaction is UTP + NH4(+) + ATP = CTP + ADP + phosphate + 2 H(+). The protein operates within pyrimidine metabolism; CTP biosynthesis via de novo pathway; CTP from UDP: step 2/2. Its activity is regulated as follows. Allosterically activated by GTP, when glutamine is the substrate; GTP has no effect on the reaction when ammonia is the substrate. The allosteric effector GTP functions by stabilizing the protein conformation that binds the tetrahedral intermediate(s) formed during glutamine hydrolysis. Inhibited by the product CTP, via allosteric rather than competitive inhibition. Functionally, catalyzes the ATP-dependent amination of UTP to CTP with either L-glutamine or ammonia as the source of nitrogen. Regulates intracellular CTP levels through interactions with the four ribonucleotide triphosphates. The protein is CTP synthase of Chloroflexus aggregans (strain MD-66 / DSM 9485).